Consider the following 428-residue polypeptide: Enolase (428 aa).

Residue Gln167 coordinates (2R)-2-phosphoglycerate. The active-site Proton donor is Glu209. 3 residues coordinate Mg(2+): Asp246, Glu289, and Asp316. Positions 341, 370, 371, and 392 each coordinate (2R)-2-phosphoglycerate. Lys341 acts as the Proton acceptor in catalysis.

Belongs to the enolase family. Component of the RNA degradosome, a multiprotein complex involved in RNA processing and mRNA degradation. Mg(2+) serves as cofactor.

Its subcellular location is the cytoplasm. It localises to the secreted. The protein localises to the cell surface. The catalysed reaction is (2R)-2-phosphoglycerate = phosphoenolpyruvate + H2O. It functions in the pathway carbohydrate degradation; glycolysis; pyruvate from D-glyceraldehyde 3-phosphate: step 4/5. Catalyzes the reversible conversion of 2-phosphoglycerate (2-PG) into phosphoenolpyruvate (PEP). It is essential for the degradation of carbohydrates via glycolysis. The polypeptide is Enolase (Saccharophagus degradans (strain 2-40 / ATCC 43961 / DSM 17024)).